Consider the following 61-residue polypeptide: MAKNLKITLHHGIVNRTPAQRATVKTLGLNKIGKTVVREDTPANRGLVNAVRHLVTVEEVD.

Belongs to the universal ribosomal protein uL30 family. As to quaternary structure, part of the 50S ribosomal subunit.

This is Large ribosomal subunit protein uL30 from Bifidobacterium longum (strain DJO10A).